A 267-amino-acid polypeptide reads, in one-letter code: Protein I267L (267 aa).

It belongs to the asfivirus I267L family.

The protein is Protein I267L of Ornithodoros (relapsing fever ticks).